Consider the following 73-residue polypeptide: NAD(P)H-quinone oxidoreductase subunit L (73 aa).

2 helical membrane passes run 7–27 (LIGLTYAALAVLYLLVLPFLF) and 44–64 (VLMFFLVLFFFPGMVLVAPFM).

This sequence belongs to the complex I NdhL subunit family. NDH-1 can be composed of about 15 different subunits; different subcomplexes with different compositions have been identified which probably have different functions.

It is found in the cellular thylakoid membrane. The catalysed reaction is a plastoquinone + NADH + (n+1) H(+)(in) = a plastoquinol + NAD(+) + n H(+)(out). It catalyses the reaction a plastoquinone + NADPH + (n+1) H(+)(in) = a plastoquinol + NADP(+) + n H(+)(out). NDH-1 shuttles electrons from an unknown electron donor, via FMN and iron-sulfur (Fe-S) centers, to quinones in the respiratory and/or the photosynthetic chain. The immediate electron acceptor for the enzyme in this species is believed to be plastoquinone. Couples the redox reaction to proton translocation, and thus conserves the redox energy in a proton gradient. Cyanobacterial NDH-1 also plays a role in inorganic carbon-concentration. The chain is NAD(P)H-quinone oxidoreductase subunit L from Synechococcus sp. (strain JA-3-3Ab) (Cyanobacteria bacterium Yellowstone A-Prime).